The sequence spans 926 residues: Peripheral plasma membrane protein CASK (926 aa).

A Protein kinase domain is found at 12 to 276; the sequence is YELCEVIGKG…VYEALNHPWL (265 aa). ATP contacts are provided by residues 18-26 and K41; that span reads IGKGPFSVV. The residue at position 51 (S51) is a Phosphoserine. Residue D141 is part of the active site. S151 and S155 each carry phosphoserine; by autocatalysis. The residue at position 182 (T182) is a Phosphothreonine. Residues 305 to 315 are calmodulin-binding; the sequence is KGAVLAAVSSH. S313 is subject to Phosphoserine. L27 domains are found at residues 343–398 and 402–455; these read AERA…SPQI and PSDA…YSDE. The segment at 482–909 is required for interaction with NRXN1 (via C-terminal tail); the sequence is MENVTRVRLV…DETIRHLEEA (428 aa). In terms of domain architecture, PDZ spans 490-571; the sequence is LVQFQKNTDE…SITFKIVPSY (82 aa). Phosphoserine occurs at positions 570 and 571. The disordered stretch occupies residues 574 to 610; sequence QSSSCERDSPSTSRQSPANGHSSTNNSVSDLPSTTQP. The region spanning 612-682 is the SH3 domain; sequence GRQIYVRAQF…PSPELQEWRV (71 aa). The region spanning 739-911 is the Guanylate kinase-like domain; the sequence is RKTLVLLGAH…TIRHLEEAVE (173 aa).

This sequence in the N-terminal section; belongs to the protein kinase superfamily. CAMK Ser/Thr protein kinase family. CaMK subfamily. It belongs to the MAGUK family. In terms of assembly, CASK and LIN7 form a tripartite complex with CASKIN1. Component of the brain-specific heterotrimeric complex (LIN-10-LIN-2-LIN-7 complex) composed of at least APBA1, CASK, and LIN7, which associates with the motor protein KIF17 to transport vesicles along microtubules. Forms a heterotrimeric complex with DLG1 and LIN7B via their L27 domains. Identified in a complex with ACTN4, IQGAP1, MAGI2, NPHS1, SPTAN1 and SPTBN1. Part of a complex containing CASK, TBR1 and TSPYL2. Interacts with WHRN. Interacts (via the PDZ, SH3 and guanylate kinase-like domains) with NRXN1 (via C-terminus). Interacts with CASKIN1, APBA1, LIN7(A/B/C), and L27 domain of DLG1 and isoform 2 of DLG4. Interacts with FCHSD2. Interacts with KIRREL3. Interacts with TBR1. Interacts with TSPYL2. Requires Unlike other protein kinases, does not require a divalent cation such as magnesium for catalytic activity. as cofactor.

The protein localises to the nucleus. It is found in the cytoplasm. It localises to the cell membrane. The enzyme catalyses L-seryl-[protein] + ATP = O-phospho-L-seryl-[protein] + ADP + H(+). It catalyses the reaction L-threonyl-[protein] + ATP = O-phospho-L-threonyl-[protein] + ADP + H(+). Differs from archetypal CaMK members in that the kinase domain exhibits a constitutively active conformation and the autoinhibitory region does not engage in direct contact with the ATP-binding cleft, although it still binds Ca(2+)/CAM. Functionally, multidomain scaffolding Mg(2+)-independent protein kinase that catalyzes the phosphotransfer from ATP to proteins such as NRXN1, and plays a role in synaptic transmembrane protein anchoring and ion channel trafficking. Contributes to neural development and regulation of gene expression via interaction with the transcription factor TBR1. Binds to cell-surface proteins, including amyloid precursor protein, neurexins, and syndecans. May mediate a link between the extracellular matrix and the actin cytoskeleton via its interaction with syndecan and with the actin/spectrin-binding protein 4.1. Component of the LIN-10-LIN-2-LIN-7 complex, which associates with the motor protein KIF17 to transport vesicles containing N-methyl-D-aspartate (NMDA) receptor subunit NR2B along microtubules. In Mus musculus (Mouse), this protein is Peripheral plasma membrane protein CASK.